The chain runs to 867 residues: Retinoblastoma-related protein 1 (867 aa).

Residues 275-476 (TPVTSAMTTA…EKGSSLYNSL (202 aa)) form a domain A region. The interval 275–722 (TPVTSAMTTA…NEVFVPAAKP (448 aa)) is pocket; binds RPD3I and RBAP1. The interval 477–594 (IVARPSVASE…PVGGNEKCAD (118 aa)) is spacer. Residues 512–563 (EGLPATPSKKRAAGPDDNADPRSPKRSCNESRNTVVERNLQTPPPKQSHMVS) are disordered. Residues 530 to 540 (ADPRSPKRSCN) are compositionally biased toward basic and acidic residues. The span at 541 to 552 (ESRNTVVERNLQ) shows a compositional bias: polar residues. Positions 595-722 (VTIHIFFSKI…NEVFVPAAKP (128 aa)) are domain B. Disordered regions lie at residues 734–762 (PEDK…MSPK) and 843–867 (QING…ETDT).

This sequence belongs to the retinoblastoma protein (RB) family. Interacts with RPD3I, RBAP1, the Arabidopsis cyclin CYCD3-1, the mastrevirus replication-associated protein A (RepA) and the begomovirus replication-associated protein (Rep). In terms of tissue distribution, ubiquitous.

The protein localises to the nucleus. Regulator of biological processes that recruits a histone deacetylase to control gene transcription. May play a role in the entry into mitosis, negatively regulating the cell proliferation. Formation of stable complexes with geminiviridae replication-associated proteins may create a cellular environment which favors viral DNA replication. This is Retinoblastoma-related protein 1 (RBR1) from Zea mays (Maize).